We begin with the raw amino-acid sequence, 732 residues long: Trehalose phosphorylase (732 aa).

A propeptide spanning residues 1-25 (MAPPHQFQSKPSDVIRRRLSSAVSS) is cleaved from the precursor.

It belongs to the glycosyltransferase group 1 family. Glycosyltransferase 4 subfamily. As to quaternary structure, homodimer.

The enzyme catalyses alpha,alpha-trehalose + phosphate = alpha-D-glucose + alpha-D-glucose 1-phosphate. Activity abolished by 1 mM Cu(2+). 0.1 mM Cu(2+) reduces trehalose phosphorolysis to 76% and trehalose synthesis to 48% of maximum activity. 1 mM Zn(2+) abolishes trehalose synthesis, and reduces trehalose phosphorolysis to 40% of maximum activity. Unaffected by EDTA. Its function is as follows. Reversibly catalyzes the synthesis and degradation of trehalose from glucose and alpha-D-glucose 1-phosphate. The equilibrium lies in the direction of trehalose synthesis. This Grifola frondosa (Maitake) protein is Trehalose phosphorylase.